The primary structure comprises 177 residues: Peptidyl-tRNA hydrolase (177 aa).

Tyrosine 12 is a tRNA binding site. Histidine 17 serves as the catalytic Proton acceptor. The tRNA site is built by phenylalanine 63, asparagine 65, and asparagine 111.

It belongs to the PTH family. Monomer.

It localises to the cytoplasm. The catalysed reaction is an N-acyl-L-alpha-aminoacyl-tRNA + H2O = an N-acyl-L-amino acid + a tRNA + H(+). Its function is as follows. Hydrolyzes ribosome-free peptidyl-tRNAs (with 1 or more amino acids incorporated), which drop off the ribosome during protein synthesis, or as a result of ribosome stalling. Functionally, catalyzes the release of premature peptidyl moieties from peptidyl-tRNA molecules trapped in stalled 50S ribosomal subunits, and thus maintains levels of free tRNAs and 50S ribosomes. The protein is Peptidyl-tRNA hydrolase of Buchnera aphidicola subsp. Acyrthosiphon pisum (strain 5A).